A 444-amino-acid chain; its full sequence is Phosphoglucosamine mutase (444 aa).

The Phosphoserine intermediate role is filled by Ser100. The Mg(2+) site is built by Ser100, Asp240, Asp242, and Asp244. Ser100 is subject to Phosphoserine.

It belongs to the phosphohexose mutase family. It depends on Mg(2+) as a cofactor. Activated by phosphorylation.

The catalysed reaction is alpha-D-glucosamine 1-phosphate = D-glucosamine 6-phosphate. Catalyzes the conversion of glucosamine-6-phosphate to glucosamine-1-phosphate. The protein is Phosphoglucosamine mutase of Desulforamulus reducens (strain ATCC BAA-1160 / DSM 100696 / MI-1) (Desulfotomaculum reducens).